Consider the following 113-residue polypeptide: uncharacterized protein (113 aa).

This sequence to H.pylori HP0245/JHP0230.

This is an uncharacterized protein from Campylobacter jejuni subsp. jejuni serotype O:2 (strain ATCC 700819 / NCTC 11168).